The sequence spans 262 residues: 3-methyl-2-oxobutanoate hydroxymethyltransferase (262 aa).

2 residues coordinate Mg(2+): Asp42 and Asp81. 3-methyl-2-oxobutanoate is bound by residues 42-43 (DS), Asp81, and Lys110. Position 112 (Glu112) interacts with Mg(2+). The Proton acceptor role is filled by Glu180.

It belongs to the PanB family. As to quaternary structure, homodecamer; pentamer of dimers. Requires Mg(2+) as cofactor.

It is found in the cytoplasm. The enzyme catalyses 3-methyl-2-oxobutanoate + (6R)-5,10-methylene-5,6,7,8-tetrahydrofolate + H2O = 2-dehydropantoate + (6S)-5,6,7,8-tetrahydrofolate. It functions in the pathway cofactor biosynthesis; (R)-pantothenate biosynthesis; (R)-pantoate from 3-methyl-2-oxobutanoate: step 1/2. Functionally, catalyzes the reversible reaction in which hydroxymethyl group from 5,10-methylenetetrahydrofolate is transferred onto alpha-ketoisovalerate to form ketopantoate. In Legionella pneumophila (strain Paris), this protein is 3-methyl-2-oxobutanoate hydroxymethyltransferase.